Reading from the N-terminus, the 377-residue chain is Nitric oxide reductase FlRd-NAD(+) reductase (377 aa).

It belongs to the FAD-dependent oxidoreductase family. FAD is required as a cofactor.

The protein resides in the cytoplasm. The enzyme catalyses 2 reduced [nitric oxide reductase rubredoxin domain] + NAD(+) + H(+) = 2 oxidized [nitric oxide reductase rubredoxin domain] + NADH. Its pathway is nitrogen metabolism; nitric oxide reduction. Functionally, one of at least two accessory proteins for anaerobic nitric oxide (NO) reductase. Reduces the rubredoxin moiety of NO reductase. This Escherichia coli O45:K1 (strain S88 / ExPEC) protein is Nitric oxide reductase FlRd-NAD(+) reductase.